Here is a 573-residue protein sequence, read N- to C-terminus: MSSRLSYVNVDDPNFYEFIDEKYSKYKIPPKQKTFKQFCFPSKYEFQIPQQFLAEYINPKTPYKGLLIYHRIGAGKTCTAIKIAENFKNKSKIMIVVPASLKGNFRSELRSLCADDHYLTSKERSELKILHPSSDEYKSIIKVSDDRIDKYYTIYSYNKFVDLIKQNKINLTNTLLIIDEVHNMISETGTYYESLYETIHSAPDNMRLVIMTATPIFDKPNEIALTMNLLVRNKQLPVGPDFVSTFMDIRYNSKGPVYHVKNMDLFKEFVKGYVSYYRGAPPYVFPKSELFFVRTKMSDLQKTVYQKITGKEVKQTKVRDYVNENISNNFFIGTRMISNIVYPNEKVGLKGYNSLTDEDLTIAKIREYSPKFLKILRKIKRCNGTVFVYSNFKEYGGIRVFARLLEFHRFKNYEFNGSGPRRFAIWSGDQDPIYKEEVKAVFNNKDNEFGSKIKVILGSSSIKEGVSFLRVQEVHIMEPYWNFSRMEQIIGRAIRFCSHKDVELDRQLVKVYIYLAVHPDIKMSIDERMMKMALDKKMINSAFEKALKEAAIDCELFKNANVYPGEQDIQCEQ.

Positions isoleucine 57–asparagine 233 constitute a Helicase ATP-binding domain. Histidine 70–threonine 77 serves as a coordination point for ATP. Residues aspartate 179 to histidine 182 carry the DEAH box motif. The 178-residue stretch at lysine 374 to alanine 551 folds into the Helicase C-terminal domain.

It belongs to the DEAD box helicase family. DEAH subfamily.

The protein localises to the virion. It carries out the reaction ATP + H2O = ADP + phosphate + H(+). The polypeptide is Putative ATP-dependent RNA helicase R563 (Acanthamoeba polyphaga mimivirus (APMV)).